Reading from the N-terminus, the 591-residue chain is L-fucose isomerase (591 aa).

Catalysis depends on proton acceptor residues glutamate 337 and aspartate 361. 3 residues coordinate Mn(2+): glutamate 337, aspartate 361, and histidine 528.

The protein belongs to the L-fucose isomerase family. In terms of assembly, homohexamer. Mn(2+) is required as a cofactor.

It localises to the cytoplasm. The catalysed reaction is L-fucose = L-fuculose. Its pathway is carbohydrate degradation; L-fucose degradation; L-lactaldehyde and glycerone phosphate from L-fucose: step 1/3. Functionally, converts the aldose L-fucose into the corresponding ketose L-fuculose. The protein is L-fucose isomerase of Escherichia coli (strain SE11).